A 218-amino-acid polypeptide reads, in one-letter code: Cytochrome b6 (218 aa).

The helical transmembrane segment at 35–55 (IFYCLGGITLVCFLIQFATGF) threads the bilayer. Cys38 contributes to the heme c binding site. Positions 89 and 103 each coordinate heme b. Helical transmembrane passes span 93–113 (ASMM…TGGF), 119–139 (LTWV…VTGY), and 189–209 (LHTF…FLMI). Residues His190 and His205 each contribute to the heme b site.

This sequence belongs to the cytochrome b family. PetB subfamily. The 4 large subunits of the cytochrome b6-f complex are cytochrome b6, subunit IV (17 kDa polypeptide, PetD), cytochrome f and the Rieske protein, while the 4 small subunits are PetG, PetL, PetM and PetN. The complex functions as a dimer. Heme b serves as cofactor. The cofactor is heme c.

The protein localises to the cellular thylakoid membrane. Component of the cytochrome b6-f complex, which mediates electron transfer between photosystem II (PSII) and photosystem I (PSI), cyclic electron flow around PSI, and state transitions. The sequence is that of Cytochrome b6 from Synechococcus sp. (strain RCC307).